The sequence spans 320 residues: Cytochrome f (320 aa).

Positions 1 to 35 are cleaved as a signal peptide; it reads MENRNTFSWVKEQMTRSISVSIMIYVITQTSISNA. Positions 36, 56, 59, and 60 each coordinate heme. A helical membrane pass occupies residues 286–306; the sequence is VQGLLFFFASVILAQVFLVLK.

It belongs to the cytochrome f family. As to quaternary structure, the 4 large subunits of the cytochrome b6-f complex are cytochrome b6, subunit IV (17 kDa polypeptide, petD), cytochrome f and the Rieske protein, while the 4 small subunits are PetG, PetL, PetM and PetN. The complex functions as a dimer. The cofactor is heme.

The protein resides in the plastid. Its subcellular location is the chloroplast thylakoid membrane. Functionally, component of the cytochrome b6-f complex, which mediates electron transfer between photosystem II (PSII) and photosystem I (PSI), cyclic electron flow around PSI, and state transitions. The sequence is that of Cytochrome f from Agrostis stolonifera (Creeping bentgrass).